The chain runs to 105 residues: uncharacterized protein (105 aa).

Residues 1–27 are disordered; sequence MQSPAMKRIKSSSHSRWDGSGSVNEMP.

The protein localises to the mitochondrion. This is an uncharacterized protein from Arabidopsis thaliana (Mouse-ear cress).